Here is a 453-residue protein sequence, read N- to C-terminus: Omega-3 fatty acid desaturase, chloroplastic (453 aa).

Residues 171–175 (HDCGH) carry the Histidine box-1 motif. The Histidine box-2 signature appears at 207–211 (HRTHH). A Histidine box-3 motif is present at residues 374–378 (HVIHH).

This sequence belongs to the fatty acid desaturase type 1 family.

It localises to the plastid. The protein resides in the chloroplast membrane. It participates in lipid metabolism; polyunsaturated fatty acid biosynthesis. Its function is as follows. Chloroplast omega-3 fatty acid desaturase introduces the third double bond in the biosynthesis of 16:3 and 18:3 fatty acids, important constituents of plant membranes. It is thought to use ferredoxin as an electron donor and to act on fatty acids esterified to galactolipids, sulfolipids and phosphatidylglycerol. The protein is Omega-3 fatty acid desaturase, chloroplastic (FAD7) of Glycine max (Soybean).